The sequence spans 154 residues: 6,7-dimethyl-8-ribityllumazine synthase (154 aa).

Residues phenylalanine 21, alanine 55 to glutamate 57, and cysteine 79 to isoleucine 81 each bind 5-amino-6-(D-ribitylamino)uracil. Alanine 84–threonine 85 is a binding site for (2S)-2-hydroxy-3-oxobutyl phosphate. Catalysis depends on histidine 87, which acts as the Proton donor. Residue phenylalanine 112 coordinates 5-amino-6-(D-ribitylamino)uracil. Arginine 126 contacts (2S)-2-hydroxy-3-oxobutyl phosphate.

This sequence belongs to the DMRL synthase family. As to quaternary structure, forms an icosahedral capsid composed of 60 subunits, arranged as a dodecamer of pentamers.

It carries out the reaction (2S)-2-hydroxy-3-oxobutyl phosphate + 5-amino-6-(D-ribitylamino)uracil = 6,7-dimethyl-8-(1-D-ribityl)lumazine + phosphate + 2 H2O + H(+). The protein operates within cofactor biosynthesis; riboflavin biosynthesis; riboflavin from 2-hydroxy-3-oxobutyl phosphate and 5-amino-6-(D-ribitylamino)uracil: step 1/2. Functionally, catalyzes the formation of 6,7-dimethyl-8-ribityllumazine by condensation of 5-amino-6-(D-ribitylamino)uracil with 3,4-dihydroxy-2-butanone 4-phosphate. This is the penultimate step in the biosynthesis of riboflavin. The sequence is that of 6,7-dimethyl-8-ribityllumazine synthase from Staphylococcus aureus (strain MRSA252).